We begin with the raw amino-acid sequence, 367 residues long: Protein RecA (367 aa).

G73–T80 is an ATP binding site. A disordered region spans residues D345 to E367.

Belongs to the RecA family.

It localises to the cytoplasm. Its function is as follows. Can catalyze the hydrolysis of ATP in the presence of single-stranded DNA, the ATP-dependent uptake of single-stranded DNA by duplex DNA, and the ATP-dependent hybridization of homologous single-stranded DNAs. It interacts with LexA causing its activation and leading to its autocatalytic cleavage. The polypeptide is Protein RecA (Herminiimonas arsenicoxydans).